A 267-amino-acid chain; its full sequence is Apolipoprotein A-I (267 aa).

The signal sequence occupies residues Met1–Ala18. A run of 2 repeats spans residues Leu68–Gly89 and Pro90–Ser111. The segment at Leu68–Gln267 is 10 X approximate tandem repeats. Met110 carries the methionine sulfoxide modification. A 3; half-length repeat occupies Lys112–Gln122. Tandem repeats lie at residues Pro123–Glu144, Pro145–Ser166, Pro167–Ala188, Pro189–Gly210, and Ala211–Lys232. The residue at position 136 (Met136) is a Methionine sulfoxide. One copy of the 9; half-length repeat lies at Pro233–Leu243. Repeat unit 10 spans residues Pro244–Gln267.

The protein belongs to the apolipoprotein A1/A4/E family. As to quaternary structure, homodimer. Interacts with APOA1BP and CLU. Component of a sperm activating protein complex (SPAP), consisting of APOA1, an immunoglobulin heavy chain, an immunoglobulin light chain and albumin. Interacts with NDRG1. Interacts with SCGB3A2. Interacts with NAXE and YJEFN3. Post-translationally, glycosylated. Palmitoylated. In terms of tissue distribution, major protein of plasma HDL, also found in chylomicrons.

Its subcellular location is the secreted. Its function is as follows. Participates in the reverse transport of cholesterol from tissues to the liver for excretion by promoting cholesterol efflux from tissues and by acting as a cofactor for the lecithin cholesterol acyltransferase (LCAT). As part of the SPAP complex, activates spermatozoa motility. The polypeptide is Apolipoprotein A-I (APOA1) (Pongo abelii (Sumatran orangutan)).